Consider the following 71-residue polypeptide: Translation initiation factor IF-1 (71 aa).

The S1-like domain maps to methionine 1 to glycine 71.

It belongs to the IF-1 family. Component of the 30S ribosomal translation pre-initiation complex which assembles on the 30S ribosome in the order IF-2 and IF-3, IF-1 and N-formylmethionyl-tRNA(fMet); mRNA recruitment can occur at any time during PIC assembly.

Its subcellular location is the cytoplasm. One of the essential components for the initiation of protein synthesis. Stabilizes the binding of IF-2 and IF-3 on the 30S subunit to which N-formylmethionyl-tRNA(fMet) subsequently binds. Helps modulate mRNA selection, yielding the 30S pre-initiation complex (PIC). Upon addition of the 50S ribosomal subunit IF-1, IF-2 and IF-3 are released leaving the mature 70S translation initiation complex. This is Translation initiation factor IF-1 from Pelagibacter ubique (strain HTCC1062).